Reading from the N-terminus, the 232-residue chain is Esterase YpfH (232 aa).

Residues Ser-111, Asp-159, and His-191 each act as charge relay system in the active site.

It belongs to the AB hydrolase superfamily. AB hydrolase 2 family.

Its function is as follows. Displays esterase activity toward palmitoyl-CoA and pNP-butyrate. In Escherichia coli (strain K12), this protein is Esterase YpfH (ypfH).